Here is a 91-residue protein sequence, read N- to C-terminus: Probable Fe(2+)-trafficking protein (91 aa).

It belongs to the Fe(2+)-trafficking protein family.

Its function is as follows. Could be a mediator in iron transactions between iron acquisition and iron-requiring processes, such as synthesis and/or repair of Fe-S clusters in biosynthetic enzymes. The sequence is that of Probable Fe(2+)-trafficking protein from Tolumonas auensis (strain DSM 9187 / NBRC 110442 / TA 4).